The following is a 203-amino-acid chain: Outer-membrane lipoprotein carrier protein (203 aa).

An N-terminal signal peptide occupies residues 1-21 (MKKLILIGCLMAGMNINVAWA).

The protein belongs to the LolA family. As to quaternary structure, monomer.

It is found in the periplasm. Functionally, participates in the translocation of lipoproteins from the inner membrane to the outer membrane. Only forms a complex with a lipoprotein if the residue after the N-terminal Cys is not an aspartate (The Asp acts as a targeting signal to indicate that the lipoprotein should stay in the inner membrane). In Photorhabdus laumondii subsp. laumondii (strain DSM 15139 / CIP 105565 / TT01) (Photorhabdus luminescens subsp. laumondii), this protein is Outer-membrane lipoprotein carrier protein.